Reading from the N-terminus, the 98-residue chain is Large ribosomal subunit protein uL23 (98 aa).

This sequence belongs to the universal ribosomal protein uL23 family. Part of the 50S ribosomal subunit. Contacts protein L29, and trigger factor when it is bound to the ribosome.

In terms of biological role, one of the early assembly proteins it binds 23S rRNA. One of the proteins that surrounds the polypeptide exit tunnel on the outside of the ribosome. Forms the main docking site for trigger factor binding to the ribosome. This is Large ribosomal subunit protein uL23 from Teredinibacter turnerae (strain ATCC 39867 / T7901).